Here is a 337-residue protein sequence, read N- to C-terminus: MVREEVAGSTQTLQWKCVESRVDSKRLYYGRFILSPLRKGQADTVGIALRRALLGETEGTCITHAKFGSVPHEYSTIAGIEESVQEILLNLKEIVLRSNLYGVRTASICVKGPRYITAQDIILPPSVEIVDTAQPIANLTEPTDFRIELRIKRDRGYHTEVRKNTQDGSYPIDAVSMPVRNVNYSIFACGNGNAKYEILFLEIWTNGSLTPKEALYEASRNLIDLFLPFLHTEEEGTRFQENKNRFTSPLLSFQKRLTNLKKNKKRIPLNCIFIDQLELPSRTYNCLKRANIHTLLDLLSKTEEDLMRIDSFRMQDGKQIWDTLEKHLPMDLPKNKF.

Residues 1–233 (MVREEVAGST…DLFLPFLHTE (233 aa)) are alpha N-terminal domain (alpha-NTD). The tract at residues 267–337 (IPLNCIFIDQ…LPMDLPKNKF (71 aa)) is alpha C-terminal domain (alpha-CTD).

Belongs to the RNA polymerase alpha chain family. As to quaternary structure, in plastids the minimal PEP RNA polymerase catalytic core is composed of four subunits: alpha, beta, beta', and beta''. When a (nuclear-encoded) sigma factor is associated with the core the holoenzyme is formed, which can initiate transcription.

It is found in the plastid. The protein localises to the chloroplast. The enzyme catalyses RNA(n) + a ribonucleoside 5'-triphosphate = RNA(n+1) + diphosphate. In terms of biological role, DNA-dependent RNA polymerase catalyzes the transcription of DNA into RNA using the four ribonucleoside triphosphates as substrates. The chain is DNA-directed RNA polymerase subunit alpha from Oryza nivara (Indian wild rice).